Reading from the N-terminus, the 789-residue chain is Protein translocase subunit SecA (789 aa).

ATP contacts are provided by residues glutamine 85, 103 to 107 (GEGKT), and aspartate 492.

This sequence belongs to the SecA family. Monomer and homodimer. Part of the essential Sec protein translocation apparatus which comprises SecA, SecYEG and auxiliary proteins SecDF. Other proteins may also be involved.

The protein resides in the cell membrane. It is found in the cytoplasm. It carries out the reaction ATP + H2O + cellular proteinSide 1 = ADP + phosphate + cellular proteinSide 2.. Its function is as follows. Part of the Sec protein translocase complex. Interacts with the SecYEG preprotein conducting channel. Has a central role in coupling the hydrolysis of ATP to the transfer of proteins into and across the cell membrane, serving as an ATP-driven molecular motor driving the stepwise translocation of polypeptide chains across the membrane. The chain is Protein translocase subunit SecA from Limosilactobacillus fermentum (strain NBRC 3956 / LMG 18251) (Lactobacillus fermentum).